A 546-amino-acid polypeptide reads, in one-letter code: uncharacterized protein (546 aa).

Disordered stretches follow at residues 37–101 (KEND…NQKL), 269–300 (QNKA…QPEV), and 392–443 (LSDL…TSAC). Basic and acidic residues-rich tracts occupy residues 81–93 (DDVK…ENNQ) and 274–283 (ADLRKTESHG). Low complexity predominate over residues 284–298 (THSQSTPPQHSSSQP).

This is an uncharacterized protein from Homo sapiens (Human).